We begin with the raw amino-acid sequence, 196 residues long: MQLKRVAEAKLPTPWGDFLMVGFEELATGHDHVALVYGDISGHTPVLARVHSECLTGDALFSLRCDCGFQLEAALTQIAEEGRGILLYHRQEGRNIGLLNKIRAYALQDQGYDTVEANHQLGFAADERDFTLCADMFKLLGVNEVRLLTNNPKKVEILTEAGINIIERVPLIVGRNPNNEHYLDTKAEKMGHLLNK.

Residue 49 to 53 (RVHSE) participates in GTP binding. Zn(2+) contacts are provided by Cys54, Cys65, and Cys67. GTP is bound by residues Gln70, 92–94 (EGR), and Thr114. The Proton acceptor role is filled by Asp126. Arg128 (nucleophile) is an active-site residue. The GTP site is built by Thr149 and Lys154.

Belongs to the GTP cyclohydrolase II family. In terms of assembly, homodimer. Zn(2+) serves as cofactor.

The enzyme catalyses GTP + 4 H2O = 2,5-diamino-6-hydroxy-4-(5-phosphoribosylamino)-pyrimidine + formate + 2 phosphate + 3 H(+). It participates in cofactor biosynthesis; riboflavin biosynthesis; 5-amino-6-(D-ribitylamino)uracil from GTP: step 1/4. In terms of biological role, catalyzes the conversion of GTP to 2,5-diamino-6-ribosylamino-4(3H)-pyrimidinone 5'-phosphate (DARP), formate and pyrophosphate. This is GTP cyclohydrolase-2 from Escherichia coli O45:K1 (strain S88 / ExPEC).